The chain runs to 63 residues: LTCVTGKSIGGISTEECAAGQKICFKKWTKMGPKLYDVSRGCTATCPKADEYGCVKCCKTDRN.

3 disulfide bridges follow: cysteine 3-cysteine 24, cysteine 17-cysteine 42, and cysteine 46-cysteine 57.

Belongs to the three-finger toxin family. Short-chain subfamily. Aminergic toxin sub-subfamily. Heterodimer of C9S3 chain 1 and chain 2 (AC P01409); disulfide-linked. As to expression, expressed by the venom gland.

It is found in the secreted. In terms of biological role, this protein shows a synergetic toxic effect in that it enhances the toxicity of other toxins. This is Synergistic-type venom protein C9S3, chain 1 from Dendroaspis angusticeps (Eastern green mamba).